The chain runs to 122 residues: Large ribosomal subunit protein bL19 (122 aa).

It belongs to the bacterial ribosomal protein bL19 family.

Its function is as follows. This protein is located at the 30S-50S ribosomal subunit interface and may play a role in the structure and function of the aminoacyl-tRNA binding site. This Chlamydia abortus (strain DSM 27085 / S26/3) (Chlamydophila abortus) protein is Large ribosomal subunit protein bL19.